The sequence spans 458 residues: Glycogen synthase (458 aa).

Lys15 is a binding site for ADP-alpha-D-glucose.

The protein belongs to the glycosyltransferase 1 family. Bacterial/plant glycogen synthase subfamily.

The catalysed reaction is [(1-&gt;4)-alpha-D-glucosyl](n) + ADP-alpha-D-glucose = [(1-&gt;4)-alpha-D-glucosyl](n+1) + ADP + H(+). The protein operates within glycan biosynthesis; glycogen biosynthesis. Synthesizes alpha-1,4-glucan chains using ADP-glucose. The sequence is that of Glycogen synthase from Gloeobacter violaceus (strain ATCC 29082 / PCC 7421).